The sequence spans 155 residues: Transcriptional repressor NrdR (155 aa).

Basic residues predominate over residues Met-1–Ser-10. Residues Met-1 to Gly-21 form a disordered region. The segment at Cys-3–Cys-34 is a zinc-finger region. An ATP-cone domain is found at Leu-49–Val-139.

It belongs to the NrdR family. Zn(2+) serves as cofactor.

Its function is as follows. Negatively regulates transcription of bacterial ribonucleotide reductase nrd genes and operons by binding to NrdR-boxes. This Lacticaseibacillus casei (strain BL23) (Lactobacillus casei) protein is Transcriptional repressor NrdR.